A 289-amino-acid polypeptide reads, in one-letter code: 3-methyl-2-oxobutanoate hydroxymethyltransferase (289 aa).

Over residues 1-10 (MSDSKSSAST) the composition is skewed to low complexity. A disordered region spans residues 1 to 33 (MSDSKSSASTSEDRLYGSAPSHDVPKRKTRTHH). Mg(2+) contacts are provided by D70 and D109. 3-methyl-2-oxobutanoate-binding positions include 70 to 71 (DS), D109, and K139. Mg(2+) is bound at residue E141. E207 serves as the catalytic Proton acceptor.

The protein belongs to the PanB family. As to quaternary structure, homodecamer; pentamer of dimers. Requires Mg(2+) as cofactor.

It is found in the cytoplasm. It catalyses the reaction 3-methyl-2-oxobutanoate + (6R)-5,10-methylene-5,6,7,8-tetrahydrofolate + H2O = 2-dehydropantoate + (6S)-5,6,7,8-tetrahydrofolate. It participates in cofactor biosynthesis; (R)-pantothenate biosynthesis; (R)-pantoate from 3-methyl-2-oxobutanoate: step 1/2. In terms of biological role, catalyzes the reversible reaction in which hydroxymethyl group from 5,10-methylenetetrahydrofolate is transferred onto alpha-ketoisovalerate to form ketopantoate. This is 3-methyl-2-oxobutanoate hydroxymethyltransferase from Rhodococcus jostii (strain RHA1).